Consider the following 377-residue polypeptide: Endolytic peptidoglycan transglycosylase RlpA (377 aa).

Positions 1 to 19 (MHKQLPVICVAAGIVLLAA) are cleaved as a signal peptide. A lipid anchor (N-palmitoyl cysteine) is attached at cysteine 20. Residue cysteine 20 is the site of S-diacylglycerol cysteine attachment. The tract at residues 196–277 (LPPRPDLSGG…PVSAPVTAPA (82 aa)) is disordered. Low complexity-rich tracts occupy residues 208 to 218 (SASSAPAQPQG) and 264 to 277 (PQTA…TAPA). The SPOR domain maps to 300-376 (AAASGRFVVQ…AQLQSFIASA (77 aa)).

It belongs to the RlpA family.

Its subcellular location is the cell membrane. Its function is as follows. Lytic transglycosylase with a strong preference for naked glycan strands that lack stem peptides. This Salmonella typhi protein is Endolytic peptidoglycan transglycosylase RlpA.